The following is a 337-amino-acid chain: Glyceraldehyde-3-phosphate dehydrogenase (337 aa).

NAD(+)-binding positions include 12–13 (RI), Asp34, and Arg79. Residues 150–152 (SCT), Thr181, 210–211 (TG), and Arg233 each bind D-glyceraldehyde 3-phosphate. Cys151 functions as the Nucleophile in the catalytic mechanism. NAD(+) is bound at residue Asn315.

This sequence belongs to the glyceraldehyde-3-phosphate dehydrogenase family. In terms of assembly, homotetramer.

Its subcellular location is the cytoplasm. The enzyme catalyses D-glyceraldehyde 3-phosphate + phosphate + NAD(+) = (2R)-3-phospho-glyceroyl phosphate + NADH + H(+). The protein operates within carbohydrate degradation; glycolysis; pyruvate from D-glyceraldehyde 3-phosphate: step 1/5. The polypeptide is Glyceraldehyde-3-phosphate dehydrogenase (GPD) (Coccidioides posadasii (strain C735) (Valley fever fungus)).